We begin with the raw amino-acid sequence, 84 residues long: Exodeoxyribonuclease 7 small subunit (84 aa).

Belongs to the XseB family. As to quaternary structure, heterooligomer composed of large and small subunits.

It localises to the cytoplasm. The catalysed reaction is Exonucleolytic cleavage in either 5'- to 3'- or 3'- to 5'-direction to yield nucleoside 5'-phosphates.. Functionally, bidirectionally degrades single-stranded DNA into large acid-insoluble oligonucleotides, which are then degraded further into small acid-soluble oligonucleotides. The sequence is that of Exodeoxyribonuclease 7 small subunit from Bartonella quintana (strain Toulouse) (Rochalimaea quintana).